The sequence spans 77 residues: Translational regulator CsrA (77 aa).

A disordered region spans residues 58–77 (ANRRTAEETLDQASRLLSQK). A compositionally biased stretch (polar residues) spans 68–77 (DQASRLLSQK).

This sequence belongs to the CsrA/RsmA family. In terms of assembly, homodimer; the beta-strands of each monomer intercalate to form a hydrophobic core, while the alpha-helices form wings that extend away from the core.

The protein resides in the cytoplasm. In terms of biological role, a translational regulator that binds mRNA to regulate translation initiation and/or mRNA stability. Usually binds in the 5'-UTR at or near the Shine-Dalgarno sequence preventing ribosome-binding, thus repressing translation. Its main target seems to be the major flagellin gene, while its function is anatagonized by FliW. The polypeptide is Translational regulator CsrA (Magnetococcus marinus (strain ATCC BAA-1437 / JCM 17883 / MC-1)).